The sequence spans 576 residues: Cyclic nucleotide-binding domain-containing protein 2 (576 aa).

An a nucleoside 3',5'-cyclic phosphate-binding site is contributed by 116-239 (SYRNYAEPLQ…DAQYRFEFFR (124 aa)).

The protein localises to the cytoplasm. It localises to the cytosol. Functionally, essential for male fertility. Plays an important role in spermatogenesis and regulates sperm motility by controlling the development of the flagellar bending of sperm. This Homo sapiens (Human) protein is Cyclic nucleotide-binding domain-containing protein 2 (CNBD2).